The following is a 357-amino-acid chain: Intracellular hyaluronan-binding protein 4 (357 aa).

Disordered regions lie at residues 56 to 116, 150 to 186, and 313 to 357; these read VVAR…HKTA, ERPR…KREF, and PGCG…PALT. A compositionally biased stretch (basic and acidic residues) spans 96–115; sequence PKQEECGGKDNSRAEKEHKT. Residues 155-171 show a composition bias toward gly residues; sequence CGRGRGGMQGRGRGGGI. A compositionally biased stretch (basic and acidic residues) spans 176-186; that stretch reads DGFDQRGKREF. The span at 348-357 shows a compositional bias: acidic residues; it reads DDPEDFPALT.

It belongs to the SERBP1-HABP4 family. As to quaternary structure, associates with ribosomes; promoting ribosome stabilization. Interacts with EEF2/eEF2; promoting ribosome stabilization.

It localises to the nucleus. It is found in the cytoplasm. Its subcellular location is the stress granule. The protein resides in the sarcoplasm. The protein localises to the nuclear body. It localises to the nucleolus. It is found in the nucleus speckle. Its subcellular location is the cajal body. The protein resides in the gem. Ribosome-binding protein that promotes ribosome hibernation, a process during which ribosomes are stabilized in an inactive state and preserved from proteasomal degradation. Acts via its association with EEF2/eEF2 factor at the A-site of the ribosome, promoting ribosome stabilization in an inactive state compatible with storage. Plays a key role in ribosome hibernation in the mature egg by promoting ribosome stabilization. Ribosomes, which are produced in large quantities during oogenesis, are stored and translationally repressed in the egg and early embryo. The polypeptide is Intracellular hyaluronan-binding protein 4 (Gallus gallus (Chicken)).